Consider the following 394-residue polypeptide: Elongation factor Tu (394 aa).

Residues 10 to 205 (KPHVNIGTIG…VDTWIPLPPR (196 aa)) enclose the tr-type G domain. The segment at 19–26 (GHVDHGKT) is G1. 19–26 (GHVDHGKT) contacts GTP. Thr26 is a Mg(2+) binding site. The G2 stretch occupies residues 60-64 (GITIN). The interval 81 to 84 (DCPG) is G3. GTP-binding positions include 81–85 (DCPGH) and 136–139 (NKCD). The G4 stretch occupies residues 136-139 (NKCD). The G5 stretch occupies residues 174–176 (SAL).

The protein belongs to the TRAFAC class translation factor GTPase superfamily. Classic translation factor GTPase family. EF-Tu/EF-1A subfamily. Monomer.

The protein localises to the cytoplasm. It carries out the reaction GTP + H2O = GDP + phosphate + H(+). In terms of biological role, GTP hydrolase that promotes the GTP-dependent binding of aminoacyl-tRNA to the A-site of ribosomes during protein biosynthesis. The sequence is that of Elongation factor Tu from Phocaeicola vulgatus (strain ATCC 8482 / DSM 1447 / JCM 5826 / CCUG 4940 / NBRC 14291 / NCTC 11154) (Bacteroides vulgatus).